The primary structure comprises 256 residues: CCAAT/enhancer-binding protein delta (256 aa).

Serine 2 bears the N-acetylserine mark. 3 disordered regions span residues 18–40 (TAEP…AEPA), 92–121 (GGPA…APGS), and 139–206 (AAAQ…NQEM). Lysine 108 participates in a covalent cross-link: Glycyl lysine isopeptide (Lys-Gly) (interchain with G-Cter in SUMO). Over residues 143–162 (PTPPASPEPPRRSPAPPAPG) the composition is skewed to pro residues. The span at 164-188 (ARDKAAGKRGPDRGSPEYRQRRERN) shows a compositional bias: basic and acidic residues. Residues 178-241 (SPEYRQRRER…AGLRRFFKQL (64 aa)) enclose the bZIP domain. A basic motif region spans residues 182-209 (RQRRERNNIAVRKSRDKAKRRNQEMQQK). Residues 213-241 (LSAENEKLQQRVEQLTRDLAGLRRFFKQL) form a leucine-zipper region.

This sequence belongs to the bZIP family. C/EBP subfamily. As to quaternary structure, binds DNA as a homodimer and as a heterodimer. Can form stable heterodimers with CEBPB. Can form stable heterodimers with CEBPA and CEBPE. Directly interacts with SPI1/PU.1; this interaction does not affect DNA-binding properties of each partner. Interacts with PRDM16.

It is found in the nucleus. In terms of biological role, transcription activator that recognizes two different DNA motifs: the CCAAT homology common to many promoters and the enhanced core homology common to many enhancers. Important transcription factor regulating the expression of genes involved in immune and inflammatory responses. Transcriptional activator that enhances IL6 transcription alone and as heterodimer with CEBPB. In Bos taurus (Bovine), this protein is CCAAT/enhancer-binding protein delta (CEBPD).